Consider the following 371-residue polypeptide: MKTKAAVLHSAGKPFEIEELELDGPREGEVLIKYTAAGLCHSDLHLIDNDLVPRFPIVGGHEGAGVIEDVGPGVTKVKPGDHVVCSFIPNCGTCRYCATGRSNLCDMGATILDGGMPDGSFRFHRGGTDYGAMCMLGTFSERATISQHSVVKVDDWLPLETAVLVGCGVPTGWASANYAGGVRAGDTCVVYGIGGIGINAVQGAAHAGAANVIAVDPVAFKREKALELGATHAFASADEAAAKVAELTWGQMADQALITVGTVVEQVVTDAFNVIGKGGTVVITGLANPEKLTVHLSGGVMTLFEKTVKGTLFGSANPQYDIVRLLRLYQAGHVKLDELVTKRYSLEEVNEGYQDLRDGKNIRGVIMHSAD.

7 residues coordinate Zn(2+): C40, H61, C91, C94, C97, C105, and C167.

Belongs to the zinc-containing alcohol dehydrogenase family. As to quaternary structure, homotrimer. Requires NADH as cofactor.

It catalyses the reaction N,N-dimethyl-4-nitrosoaniline + a primary alcohol = 4-(hydroxylamino)-N,N-dimethylaniline + an aldehyde. The catalysed reaction is ethanol + A = acetaldehyde + AH2. Inhibited by trans-4-(N,N-dimethylamino)-cinnamaldehyde through direct binding to the catalytic zinc ion in a substrate-like geometry. Isobutyramide acts as a competitive inhibitor with respect to the electron acceptor NDMA. Acetaldehyde, AMP, ADP, ATP, as well as CuSO(4), FeSO(4), HgCl(2), NiCl(2), ZnSO(4), KCN, and NaN(3) are additional inhibitors of the catalytic activity. Its function is as follows. Catalytically different from common alcohol dehydrogenases. Effective in oxidizing ethanol, other primary alcohols and benzylalcohol only in the presence of p-nitroso-N,N-dimethylaniline (NDMA) as an electron acceptor. NADH acts as a cofactor here instead as a coenzyme. This chain is NDMA-dependent alcohol dehydrogenase, found in Amycolatopsis methanolica.